Consider the following 373-residue polypeptide: Putative glutamate--cysteine ligase 2-2 (373 aa).

This sequence belongs to the glutamate--cysteine ligase type 2 family. YbdK subfamily.

It carries out the reaction L-cysteine + L-glutamate + ATP = gamma-L-glutamyl-L-cysteine + ADP + phosphate + H(+). ATP-dependent carboxylate-amine ligase which exhibits weak glutamate--cysteine ligase activity. This Legionella pneumophila (strain Corby) protein is Putative glutamate--cysteine ligase 2-2.